Consider the following 375-residue polypeptide: Succinyl-diaminopimelate desuccinylase (375 aa).

His-66 is a Zn(2+) binding site. Asp-68 is a catalytic residue. Asp-99 contacts Zn(2+). The active-site Proton acceptor is the Glu-133. 3 residues coordinate Zn(2+): Glu-134, Glu-162, and His-348.

It belongs to the peptidase M20A family. DapE subfamily. Homodimer. The cofactor is Zn(2+). Co(2+) serves as cofactor.

The enzyme catalyses N-succinyl-(2S,6S)-2,6-diaminopimelate + H2O = (2S,6S)-2,6-diaminopimelate + succinate. Its pathway is amino-acid biosynthesis; L-lysine biosynthesis via DAP pathway; LL-2,6-diaminopimelate from (S)-tetrahydrodipicolinate (succinylase route): step 3/3. Functionally, catalyzes the hydrolysis of N-succinyl-L,L-diaminopimelic acid (SDAP), forming succinate and LL-2,6-diaminopimelate (DAP), an intermediate involved in the bacterial biosynthesis of lysine and meso-diaminopimelic acid, an essential component of bacterial cell walls. The protein is Succinyl-diaminopimelate desuccinylase of Escherichia coli O7:K1 (strain IAI39 / ExPEC).